Reading from the N-terminus, the 144-residue chain is UPF0299 membrane protein MS1271 (144 aa).

Helical transmembrane passes span 5-25 (IFLF…GEGI), 28-48 (LIPI…IGLT), 57-77 (VFFG…PVSV), and 92-112 (SLLI…GFLG).

The protein belongs to the UPF0299 family.

It localises to the cell inner membrane. In Mannheimia succiniciproducens (strain KCTC 0769BP / MBEL55E), this protein is UPF0299 membrane protein MS1271.